Here is a 443-residue protein sequence, read N- to C-terminus: Thymidine phosphorylase (443 aa).

Belongs to the thymidine/pyrimidine-nucleoside phosphorylase family. In terms of assembly, homodimer.

It carries out the reaction thymidine + phosphate = 2-deoxy-alpha-D-ribose 1-phosphate + thymine. The protein operates within pyrimidine metabolism; dTMP biosynthesis via salvage pathway; dTMP from thymine: step 1/2. Its function is as follows. The enzymes which catalyze the reversible phosphorolysis of pyrimidine nucleosides are involved in the degradation of these compounds and in their utilization as carbon and energy sources, or in the rescue of pyrimidine bases for nucleotide synthesis. The sequence is that of Thymidine phosphorylase from Shewanella oneidensis (strain ATCC 700550 / JCM 31522 / CIP 106686 / LMG 19005 / NCIMB 14063 / MR-1).